Consider the following 616-residue polypeptide: Protein translocase subunit SecD (616 aa).

The next 6 helical transmembrane spans lie at 11–31 (LMVIFIVAIGILYSLPNIYGE), 453–473 (QGINASLWGLVAVIAFMLFYY), 475–495 (MFGVIASFALVINIVLLVGLM), 497–517 (ILPGATLSMPGIAGIVLTLGM), 547–569 (YNGAFTSIFDANLTTILTAIILY), and 585–605 (LGVAISMFTAITGTRALVNAL).

Belongs to the SecD/SecF family. SecD subfamily. In terms of assembly, forms a complex with SecF. Part of the essential Sec protein translocation apparatus which comprises SecA, SecYEG and auxiliary proteins SecDF-YajC and YidC.

It localises to the cell inner membrane. Its function is as follows. Part of the Sec protein translocase complex. Interacts with the SecYEG preprotein conducting channel. SecDF uses the proton motive force (PMF) to complete protein translocation after the ATP-dependent function of SecA. This chain is Protein translocase subunit SecD, found in Haemophilus influenzae (strain ATCC 51907 / DSM 11121 / KW20 / Rd).